The following is a 448-amino-acid chain: tRNA-2-methylthio-N(6)-dimethylallyladenosine synthase (448 aa).

One can recognise an MTTase N-terminal domain in the interval 2–119 (KKLYIKTFGC…LSDLIAKRRE (118 aa)). The [4Fe-4S] cluster site is built by Cys11, Cys48, Cys82, Cys156, Cys160, and Cys163. In terms of domain architecture, Radical SAM core spans 142 to 377 (RQTRGSAYVS…LVESQANQIS (236 aa)). One can recognise a TRAM domain in the interval 378–444 (QKMLGNIERV…NYTLRGKLVE (67 aa)).

This sequence belongs to the methylthiotransferase family. MiaB subfamily. As to quaternary structure, monomer. The cofactor is [4Fe-4S] cluster.

The protein localises to the cytoplasm. It catalyses the reaction N(6)-dimethylallyladenosine(37) in tRNA + (sulfur carrier)-SH + AH2 + 2 S-adenosyl-L-methionine = 2-methylsulfanyl-N(6)-dimethylallyladenosine(37) in tRNA + (sulfur carrier)-H + 5'-deoxyadenosine + L-methionine + A + S-adenosyl-L-homocysteine + 2 H(+). Its function is as follows. Catalyzes the methylthiolation of N6-(dimethylallyl)adenosine (i(6)A), leading to the formation of 2-methylthio-N6-(dimethylallyl)adenosine (ms(2)i(6)A) at position 37 in tRNAs that read codons beginning with uridine. The sequence is that of tRNA-2-methylthio-N(6)-dimethylallyladenosine synthase from Polynucleobacter necessarius subsp. necessarius (strain STIR1).